Reading from the N-terminus, the 229-residue chain is Demethylmenaquinone methyltransferase (229 aa).

S-adenosyl-L-methionine is bound by residues threonine 62, aspartate 80, aspartate 100 to glycine 101, and serine 117.

The protein belongs to the class I-like SAM-binding methyltransferase superfamily. MenG/UbiE family.

The catalysed reaction is a 2-demethylmenaquinol + S-adenosyl-L-methionine = a menaquinol + S-adenosyl-L-homocysteine + H(+). It functions in the pathway quinol/quinone metabolism; menaquinone biosynthesis; menaquinol from 1,4-dihydroxy-2-naphthoate: step 2/2. Methyltransferase required for the conversion of demethylmenaquinol (DMKH2) to menaquinol (MKH2). The chain is Demethylmenaquinone methyltransferase from Corynebacterium kroppenstedtii (strain DSM 44385 / JCM 11950 / CIP 105744 / CCUG 35717).